A 210-amino-acid polypeptide reads, in one-letter code: Orotate phosphoribosyltransferase (210 aa).

Residue K26 coordinates 5-phospho-alpha-D-ribose 1-diphosphate. F34–F35 is an orotate binding site. 5-phospho-alpha-D-ribose 1-diphosphate contacts are provided by residues Y72–K73, R98, K99, K102, H104, and D123–A131. Orotate is bound by residues T127 and R155.

The protein belongs to the purine/pyrimidine phosphoribosyltransferase family. PyrE subfamily. In terms of assembly, homodimer. Requires Mg(2+) as cofactor.

The enzyme catalyses orotidine 5'-phosphate + diphosphate = orotate + 5-phospho-alpha-D-ribose 1-diphosphate. Its pathway is pyrimidine metabolism; UMP biosynthesis via de novo pathway; UMP from orotate: step 1/2. Catalyzes the transfer of a ribosyl phosphate group from 5-phosphoribose 1-diphosphate to orotate, leading to the formation of orotidine monophosphate (OMP). The protein is Orotate phosphoribosyltransferase of Legionella pneumophila (strain Paris).